We begin with the raw amino-acid sequence, 386 residues long: Enoyl-[acyl-carrier-protein] reductase 2, mitochondrial (386 aa).

The transit peptide at 1-22 directs the protein to the mitochondrion; that stretch reads MYSVLKQSIRPRLLATHNQFRT. Tyr-79 (proton donor) is an active-site residue. NADP(+) contacts are provided by residues Asn-172, 199–202, 222–224, 296–299, 321–323, and Lys-381; these read TSAV, RDR, YGGM, and FWV.

Belongs to the zinc-containing alcohol dehydrogenase family. Quinone oxidoreductase subfamily. As to quaternary structure, homodimer and heterodimer with ETR1.

It is found in the mitochondrion. The catalysed reaction is a 2,3-saturated acyl-[ACP] + NADP(+) = a (2E)-enoyl-[ACP] + NADPH + H(+). Functionally, required for respiration and the maintenance of the mitochondrial compartment. Oxidoreductase with a preference for short and medium chain substrates, including trans-2-hexenoyl-CoA (C6), trans-2-decenoyl-CoA (C10), and trans-2-hexadecenoyl-CoA (C16). May play a role in mitochondrial fatty acid synthesis. In Candida tropicalis (Yeast), this protein is Enoyl-[acyl-carrier-protein] reductase 2, mitochondrial (ETR2).